Consider the following 1218-residue polypeptide: MEESQSKQESNTRVAQHGSQQDVDPTFQTKRALEKERSKPRPRPLPRVQLQSLPGWSSTSNDVPLSQLIREMDHESRRCIHRSKKKLDRSEHISQGTIPEIYEKRKETISHTQSMEQKYLFQNFTKLLLLQKCCPGGSEKLVRESWHPCVPEEGGHMIEIQDLFDPNLDTEKKPQLVIIEGAAGIGKSTLARQVKRAWDEGQLYRDRFQHVFFFSCRELAQCKQLSLAELIAQGQEVPTAPTRQILSRPEKLLFILDGIDEPAWVLEDQNPELCVHWSQAQPVHTLLGSLLGKSILPEASLMLTARTTALQKLVPSLGQPHRVEVLGFSEFERKDYFYKYFAKERNTIIDFNLIGSIPVLLTLCEVPWVCWLLCTCLEKQMQQGEVLSLTSQTTTALCLKYLSLTIPGQHLSTQLRTLCSLAAEGICQRRTLFSKSDLCKQGLAEDAIATFLKIGVLQRQPSSLSYSFAHLCLQEFFAAMSYILEDSEEAHGDMGNDRTVETLVERYGRQNLFEAPTVRFLLGLLNTREMREMENIFACKFPWETKLKLLQSIIGEPFCQPCHLGLFHCLYENQEEELLTETMLCFPLTASGPNHMEATVFQTNVKRLVIQTDMELMVVTFCITFSHVRSLRLKGKGQQEYKLTAPAMVLYRWTPISEASWKVLFSNLKCTRNLEELDLSGNPLSYSAVRSLCTALRQPGCRLKTLWLVDCGLTSRCCSFLASMLSAHSRLAELDLRLNDLGDNGVRQLCEGLRNPACNLSILRLDQASLSEQVITELRALETKNPKLFISSTWMSHMTMPTENTDGEESLTSSKQQQQQSGDKHMEPLGTDDDFWGPSGPVSTEVVDRERNLYRVRLPMAGSYHCPSTGLHFVVTRAVTIEIGFCAWSQFLHETPLQHSHMVAGPLFDIKAEHGAVTAVCLPHFVSLQEGKVDSSLFHVAHFQDHGMVLETPARVEPHFAVLENPSFSPMGVLLRMIPAVGHFIPITSITLIYYRLYLEDITFHLYLVPNDCTIRKAIDEEELKFQFVRINKPPPVDALYVGSRYIVSSSKEVEILPKELELCYRSPRESQLFSEIYVGNIGSGINLQLTDKKYMNLIWEALLKPGDLRPALPRMASAPKDAPALLHFVDQHREQLVARVTSVDPLLDKLHGLVLSEEDYETVRAEATNQDKMRKLFRGSRSWSWDCKDHFYQALKETHPHLIMDLLEKSGGVSVRL.

Positions Met-1–Asn-61 are disordered. The span at Lys-7–Thr-29 shows a compositional bias: polar residues. The NACHT domain maps to Gln-175–Leu-484. Gly-181–Ser-188 is an ATP binding site. LRR repeat units lie at residues Lys-343 to Cys-364, Asn-673 to Cys-693, and Arg-730 to Cys-750. Positions Thr-799–Lys-815 are enriched in polar residues. The segment at Thr-799 to Val-842 is disordered. Residues Phe-835–Phe-968 form a ZU5 region. Residues Phe-835–Ser-1118 form the FIIND domain. The UPA stretch occupies residues Ser-969–Ser-1118. Positions Asp-1122 to Ser-1211 constitute a CARD domain.

Belongs to the NLRP family. As to quaternary structure, interacts (via LRR repeats) with BCL2 and BCL2L1 (via the loop between motifs BH4 and BH3). Interacts with NOD2; this interaction is enhanced in the presence of muramyl dipeptide (MDP) and increases IL1B release. Interacts with EIF2AK2/PKR; this interaction requires EIF2AK2 activity, is accompanied by EIF2AK2 autophosphorylation and promotes inflammasome assembly in response to danger-associated signals. Interacts with MEFV; this interaction targets Nlrp1a to degradation by autophagy, hence preventing excessive IL1B- and IL18-mediated inflammation. Interacts with DPP9; leading to inhibit activation of the inflammasome. DPP9 acts via formation of a ternary complex, composed of a DPP9 homodimer, one full-length NLRP1 protein, and one cleaved C-terminus of Nlrp1a (NACHT, LRR and PYD domains-containing protein 1a, C-terminus). Interacts with DPP8; leading to inhibit activation of the inflammasome, probably via formation of a ternary complex with DPP8. In terms of assembly, interacts with the C-terminal part of Nlrp1a (NACHT, LRR and PYD domains-containing protein 1a, C-terminus) in absence of pathogens and other damage-associated signals. Interacts with the N-terminal part of Nlrp1a (NACHT, LRR and PYD domains-containing protein 1a, N-terminus) in absence of pathogens and other damage-associated signals. Homomultimer; forms the Nlrp1a inflammasome polymeric complex, a filament composed of homopolymers of this form in response to pathogens and other damage-associated signals. The Nlrp1a inflammasome polymeric complex directly recruits pro-caspase-1 (proCASP1) independently of PYCARD/ASC. Interacts (via CARD domain) with CASP1 (via CARD domain); leading to CASP1 activation. Autocatalytically cleaved. Autocatalytic cleavage in FIIND region occurs constitutively, prior to activation signals, and is required for inflammasome activity (IL1B release), possibly by facilitating CASP1 binding. Both N- and C-terminal parts remain associated non-covalently. In terms of processing, (Microbial infection) Cleavage by B.anthracis lethal toxin (LT) endopeptidase promotes ubiquitination and degradation of the N-terminal part, releasing the cleaved C-terminal part of the protein (NACHT, LRR and PYD domains-containing protein 1a, C-terminus), which polymerizes and forms the Nlrp1a inflammasome. Post-translationally, ubiquitinated in response to pathogen-associated signals, leading to its degradation by the proteasome and subsequent release of the cleaved C-terminal part of the protein (NACHT, LRR and PYD domains-containing protein 1a, C-terminus), which polymerizes and forms the Nlrp1a inflammasome.

It localises to the cytoplasm. The protein resides in the cytosol. It is found in the nucleus. The protein localises to the inflammasome. Activated by cleavage by B.anthracis lethal toxin (LT) endopeptidase. Cleavage by LT promotes ubiquitination and degradation of the N-terminal part, releasing the cleaved C-terminal part of the protein (NACHT, LRR and PYD domains-containing protein 1a, C-terminus), which polymerizes and forms the Nlrp1a inflammasome. Nlrp1a inflammasome is inhibited by DPP8 and DPP9, which sequester the C-terminal fragment of Nlrp1a (NACHT, LRR and PYD domains-containing protein 1a, C-terminus) in a ternary complex, thereby preventing Nlrp1a oligomerization and activation. Nlrp1a inflammasome is weakly activated by Val-boroPro (Talabostat, PT-100), an inhibitor of dipeptidyl peptidases DPP8 and DPP9. Val-boroPro relieves inhibition of DPP8 and/or DPP9 by promoting disruption of the ternary complex, releasing its C-terminal part from autoinhibition. Weakly activated by Toxoplasma gondii. Acts as the sensor component of the Nlrp1a inflammasome, which mediates inflammasome activation in response to various pathogen-associated signals, leading to subsequent pyroptosis. Inflammasomes are supramolecular complexes that assemble in the cytosol in response to pathogens and other damage-associated signals and play critical roles in innate immunity and inflammation. Acts as a recognition receptor (PRR): recognizes specific pathogens and other damage-associated signals, such as B.anthracis lethal toxin (LT) or Val-boroPro inhibitor, and mediates the formation of the inflammasome polymeric complex. In response to pathogen-associated signals, the N-terminal part of Nlrp1a is degraded by the proteasome, releasing the cleaved C-terminal part of the protein (NACHT, LRR and PYD domains-containing protein 1a, C-terminus), which polymerizes to initiate the formation of the inflammasome complex: the inflammasome directly recruits pro-caspase-1 (proCASP1) independently of PYCARD/ASC and promotes caspase-1 (CASP1) activation, which subsequently cleaves and activates inflammatory cytokines IL1B and IL18 and gasdermin-D (GSDMD), leading to pyroptosis. In the absence of GSDMD expression, the Nlrp1a inflammasome is able to recruit and activate CASP8, leading to activation of gasdermin-E (GSDME). In terms of biological role, constitutes the precursor of the Nlrp1a inflammasome, which mediates autoproteolytic processing within the FIIND domain to generate the N-terminal and C-terminal parts, which are associated non-covalently in absence of pathogens and other damage-associated signals. Functionally, regulatory part that prevents formation of the Nlrp1a inflammasome: in absence of pathogens and other damage-associated signals, interacts with the C-terminal part of Nlrp1a (NACHT, LRR and PYD domains-containing protein 1a, C-terminus), preventing activation of the Nlrp1a inflammasome. In response to pathogen-associated signals, this part is ubiquitinated by the N-end rule pathway and degraded by the proteasome, releasing the cleaved C-terminal part of the protein, which polymerizes and forms the Nlrp1a inflammasome. Its function is as follows. Constitutes the active part of the Nlrp1a inflammasome. In absence of pathogens and other damage-associated signals, interacts with the N-terminal part of Nlrp1a (NACHT, LRR and PYD domains-containing protein 1a, N-terminus), preventing activation of the Nlrp1a inflammasome. In response to pathogen-associated signals, the N-terminal part of Nlrp1a is degraded by the proteasome, releasing this form, which polymerizes to form the Nlrp1a inflammasome complex: the Nlrp1a inflammasome complex then directly recruits pro-caspase-1 (proCASP1) and promotes caspase-1 (CASP1) activation, leading to gasdermin-D (GSDMD) cleavage and subsequent pyroptosis. In Rattus norvegicus (Rat), this protein is NACHT, LRR and PYD domains-containing protein 1a allele 1.